We begin with the raw amino-acid sequence, 565 residues long: Anaphase-promoting complex subunit 7 (565 aa).

TPR repeat units lie at residues 101-134 (EIEVKYKMAECYTMLKQDKDAIAILDGIPSRQRT), 169-202 (LDAILGLLSLSVKGAEVASMTMNVIQTVPNLDWL), 203-236 (SVWIKAYAFVHTGDNSRAISTICSLEKKSLLRDN), 237-270 (VDLLGSLADLYFRAGDNKNSVLKFEQAQMLDPYL), 339-372 (VQALLLKGAALRNMGRVQEAIIHFREAIRLAPCR), 373-406 (LDCYEGLIECYLASNSIREAMVMANNVYKTLGAN), 407-441 (AQTLTLLATVCLEDPVTQEKAKTLLDKALTQRPDY), 442-474 (IKAVVKKAELLSREQKYEDGIALLRNALANQSD), 475-508 (CVLHRILGDFLVAVNEYQEAMDQYSIALSLDPND), and 509-531 (QKSLEGMQKMEKEESPTDATQEE). Lys229 carries the post-translational modification N6-acetyllysine. A compositionally biased stretch (basic and acidic residues) spans 513-523 (EGMQKMEKEES). A disordered region spans residues 513-565 (EGMQKMEKEESPTDATQEEDVDDMEGSGEEGDLEGSDSEAAQWADQEQWFGMQ). The span at 528 to 549 (TQEEDVDDMEGSGEEGDLEGSD) shows a compositional bias: acidic residues.

It belongs to the APC7 family. V-shaped homodimer. The mammalian APC/C is composed at least of 14 distinct subunits ANAPC1, ANAPC2, CDC27/APC3, ANAPC4, ANAPC5, CDC16/APC6, ANAPC7, CDC23/APC8, ANAPC10, ANAPC11, CDC26/APC12, ANAPC13, ANAPC15 and ANAPC16 that assemble into a complex of at least 19 chains with a combined molecular mass of around 1.2 MDa; APC/C interacts with FZR1 and FBXO5.

The protein localises to the cytoplasm. It is found in the cytoskeleton. It localises to the nucleus. Its subcellular location is the spindle. Its pathway is protein modification; protein ubiquitination. In terms of biological role, component of the anaphase promoting complex/cyclosome (APC/C), a cell cycle-regulated E3 ubiquitin ligase that controls progression through mitosis and the G1 phase of the cell cycle. The APC/C complex acts by mediating ubiquitination and subsequent degradation of target proteins: it mainly mediates the formation of 'Lys-11'-linked polyubiquitin chains and, to a lower extent, the formation of 'Lys-48'- and 'Lys-63'-linked polyubiquitin chains. The APC/C complex catalyzes assembly of branched 'Lys-11'-/'Lys-48'-linked branched ubiquitin chains on target proteins. APC7 is not required for the assembly of the APC/C complex, but has an enzyme-substrate adapter activity mediating the processive ubiquitination of specific substrates. Involved in brain development through the specific ubiquitination and clearance of MKI67 from constitutive heterochromatin after neuronal progenitors exit mitosis. In Homo sapiens (Human), this protein is Anaphase-promoting complex subunit 7.